The following is a 266-amino-acid chain: Phosphoethanolamine N-methyltransferase (266 aa).

Phosphoethanolamine is bound at residue glutamine 18. The active site involves tyrosine 19. Tyrosine 27 provides a ligand contact to phosphoethanolamine. S-adenosyl-L-methionine contacts are provided by isoleucine 36, serine 37, glycine 63, aspartate 85, isoleucine 86, aspartate 110, isoleucine 111, and arginine 127. Histidine 132 is a catalytic residue. The phosphoethanolamine site is built by tyrosine 160, tyrosine 175, arginine 179, tyrosine 181, and lysine 247.

Belongs to the class I-like SAM-binding methyltransferase superfamily. PEAMT family. Monomer.

The protein localises to the golgi apparatus membrane. It localises to the cytoplasm. The enzyme catalyses phosphoethanolamine + S-adenosyl-L-methionine = N-methylethanolamine phosphate + S-adenosyl-L-homocysteine + H(+). It carries out the reaction N-methylethanolamine phosphate + S-adenosyl-L-methionine = N,N-dimethylethanolamine phosphate + S-adenosyl-L-homocysteine + H(+). The catalysed reaction is N,N-dimethylethanolamine phosphate + S-adenosyl-L-methionine = phosphocholine + S-adenosyl-L-homocysteine + H(+). It participates in phospholipid metabolism; phosphatidylcholine biosynthesis; phosphocholine from phosphoethanolamine. Its activity is regulated as follows. Inhibited by phosphocholine. Inhibited by hexadecylphosphocholine (miltefosine). Inhibited by S-adenosyl-l-homocysteine. Weakly inhibited in vitro by amodiaquine, chloroquine and primaquine. Inhibited by NSC-158011. Catalyzes N-methylation of phosphoethanolamine, phosphomonomethylethanolamine and phosphodimethylethanolamine, the three methylation steps required to convert phosphoethanolamine to phosphocholine. Has no ethanolamine- or phosphatidylethanolamine-N-methyltransferase activity. Required for gametocyte development, maturation and transmission to mosquitoes and for oocyst formation in the mosquito midgut. The chain is Phosphoethanolamine N-methyltransferase from Plasmodium falciparum (isolate 3D7).